Reading from the N-terminus, the 65-residue chain is Bacteriocin amylovorin-L (65 aa).

The propeptide occupies 1–15 (MKQLNSEQLQNIIGG). The helical transmembrane segment at 39–59 (LGGVWGAVIGGVGGAAVCGLA) threads the bilayer.

Active lactobin is composed of two different peptides, one which is lactobin A.

It is found in the secreted. The protein resides in the host cell membrane. In terms of biological role, this heat stable bacteriocin inhibits the growth of closely related Lactobacillus species. It may act as a pore-forming protein, creating a channel in the cell membrane. It kills Lactobacillus helveticus ATCC 15009, but displays no activity towards Listeria species. This is Bacteriocin amylovorin-L (amyL) from Lactobacillus amylovorus.